The primary structure comprises 632 residues: 2-oxoacid:ferredoxin oxidoreductase subunit alpha (632 aa).

The YPITP motif signature appears at 254–258 (YPITP). The substrate site is built by Thr257 and Arg345.

In terms of assembly, heterodimer composed of an alpha and a beta subunit.

The catalysed reaction is a 2-oxocarboxylate + 2 oxidized [2Fe-2S]-[ferredoxin] + CoA = an acyl-CoA + 2 reduced [2Fe-2S]-[ferredoxin] + CO2 + H(+). In terms of biological role, catalyzes the coenzyme A-dependent oxidative decarboxylation of different 2-oxoacids such as 2-oxoglutarate, pyruvate and 2-oxobutyrate to form their CoA derivatives. The chain is 2-oxoacid:ferredoxin oxidoreductase subunit alpha from Saccharolobus solfataricus (Sulfolobus solfataricus).